A 593-amino-acid chain; its full sequence is Metal-response element-binding transcription factor 2 (593 aa).

Positions 1 to 24 are disordered; that stretch reads MRDSTGAGNSLVHKRSPLRRNQKT. Basic residues predominate over residues 12–22; sequence VHKRSPLRRNQ. Residue T24 is modified to Phosphothreonine. The Tudor domain occupies 44-101; it reads CKFEEGQDVLARWSDGLFYLGTIKKINILKQSCFIIFEDSSKSWVLWKDIQTGATGSG. 2 consecutive PHD-type zinc fingers follow at residues 102–157 and 201–255; these read EMVC…CVFA and QCYC…CSSG. Disordered regions lie at residues 357–410 and 444–486; these read VAFK…GPYT and GIAH…TRTG. K360 is covalently cross-linked (Glycyl lysine isopeptide (Lys-Gly) (interchain with G-Cter in SUMO2)). The span at 360 to 374 shows a compositional bias: basic and acidic residues; it reads KAEKEPEGTSHEFKI. Positions 447–470 are enriched in polar residues; the sequence is HSSNTSDVDLTGASSANETTSASI. Residue S452 is modified to Phosphoserine. K522 participates in a covalent cross-link: Glycyl lysine isopeptide (Lys-Gly) (interchain with G-Cter in SUMO2).

This sequence belongs to the Polycomblike family. As to quaternary structure, associates with the PRC2 complex, which consists of the core components EED, EZH1 or EZH2, SUZ12, and RBBP4, and various combinations of accessory subunits including AEBP2, JARID2, PHF19, MTF2 and EPOP. Forms a dimeric PRC2.1 (class 1, PRC-PCL) complex consisting of at least SUZ12, RBBP4, and PHF19 or MTF2; PHF19 and MTF2 stabilize the dimeric structure which enhances PRC2 interaction with chromatin.

It is found in the nucleus. Functionally, polycomb group (PcG) protein that specifically binds histone H3 trimethylated at 'Lys-36' (H3K36me3) and recruits the PRC2 complex, thus enhancing PRC2 H3K27me3 methylation activity. Regulates the transcriptional networks during embryonic stem cell self-renewal and differentiation. Promotes recruitment of the PRC2 complex to the inactive X chromosome in differentiating XX ES cells and PRC2 recruitment to target genes in undifferentiated ES cells. Required to repress Hox genes by enhancing H3K27me3 methylation of the PRC2 complex. In some conditions may act as an inhibitor of PRC2 activity: able to activate the CDKN2A gene and promote cellular senescence by suppressing the catalytic activity of the PRC2 complex locally. Binds to the metal-regulating-element (MRE) of MT1A gene promoter. This Mus musculus (Mouse) protein is Metal-response element-binding transcription factor 2 (Mtf2).